The primary structure comprises 313 residues: Methionyl-tRNA formyltransferase (313 aa).

112-115 (SLLP) contacts (6S)-5,6,7,8-tetrahydrofolate.

Belongs to the Fmt family.

The enzyme catalyses L-methionyl-tRNA(fMet) + (6R)-10-formyltetrahydrofolate = N-formyl-L-methionyl-tRNA(fMet) + (6S)-5,6,7,8-tetrahydrofolate + H(+). In terms of biological role, attaches a formyl group to the free amino group of methionyl-tRNA(fMet). The formyl group appears to play a dual role in the initiator identity of N-formylmethionyl-tRNA by promoting its recognition by IF2 and preventing the misappropriation of this tRNA by the elongation apparatus. This Roseiflexus castenholzii (strain DSM 13941 / HLO8) protein is Methionyl-tRNA formyltransferase.